The chain runs to 482 residues: Cardiolipin synthase (482 aa).

Helical transmembrane passes span Leu4–Phe24 and Trp34–Phe54. PLD phosphodiesterase domains follow at residues Leu217–Tyr244 and Asp395–Ser422. Active-site residues include His222, Lys224, Asp229, His400, Lys402, and Asp407.

Belongs to the phospholipase D family. Cardiolipin synthase subfamily.

It localises to the cell membrane. It catalyses the reaction 2 a 1,2-diacyl-sn-glycero-3-phospho-(1'-sn-glycerol) = a cardiolipin + glycerol. Catalyzes the reversible phosphatidyl group transfer from one phosphatidylglycerol molecule to another to form cardiolipin (CL) (diphosphatidylglycerol) and glycerol. This chain is Cardiolipin synthase (cls), found in Listeria monocytogenes serotype 4a (strain HCC23).